The primary structure comprises 220 residues: UPF0319 protein YccT (220 aa).

The signal sequence occupies residues 1–20; sequence MKTGIVTTLIALCLPVSVFA.

The protein belongs to the UPF0319 family.

The protein is UPF0319 protein YccT of Escherichia coli (strain 55989 / EAEC).